The following is a 357-amino-acid chain: Nicotinate-nucleotide--dimethylbenzimidazole phosphoribosyltransferase (357 aa).

Residue E323 is the Proton acceptor of the active site.

It belongs to the CobT family.

It carries out the reaction 5,6-dimethylbenzimidazole + nicotinate beta-D-ribonucleotide = alpha-ribazole 5'-phosphate + nicotinate + H(+). It functions in the pathway nucleoside biosynthesis; alpha-ribazole biosynthesis; alpha-ribazole from 5,6-dimethylbenzimidazole: step 1/2. Its function is as follows. Catalyzes the synthesis of alpha-ribazole-5'-phosphate from nicotinate mononucleotide (NAMN) and 5,6-dimethylbenzimidazole (DMB). In Nitratidesulfovibrio vulgaris (strain ATCC 29579 / DSM 644 / CCUG 34227 / NCIMB 8303 / VKM B-1760 / Hildenborough) (Desulfovibrio vulgaris), this protein is Nicotinate-nucleotide--dimethylbenzimidazole phosphoribosyltransferase.